Reading from the N-terminus, the 56-residue chain is Large ribosomal subunit protein bL33 (56 aa).

It belongs to the bacterial ribosomal protein bL33 family.

This chain is Large ribosomal subunit protein bL33, found in Rickettsia africae (strain ESF-5).